The following is a 419-amino-acid chain: Methylthioribose kinase (419 aa).

Residues Asn-49 and Lys-64 each coordinate ATP. Asp-239 lines the substrate pocket. 256-258 (DPE) serves as a coordination point for ATP. Arg-365 serves as a coordination point for substrate.

The protein belongs to the methylthioribose kinase family. Homodimer.

The catalysed reaction is 5-(methylsulfanyl)-D-ribose + ATP = 5-(methylsulfanyl)-alpha-D-ribose 1-phosphate + ADP + H(+). The enzyme catalyses 5-deoxy-D-ribose + ATP = 5-deoxy-alpha-D-ribose 1-phosphate + ADP + H(+). Its pathway is amino-acid biosynthesis; L-methionine biosynthesis via salvage pathway; S-methyl-5-thio-alpha-D-ribose 1-phosphate from S-methyl-5'-thioadenosine (hydrolase route): step 2/2. Catalyzes the phosphorylation of methylthioribose into methylthioribose-1-phosphate. Also catalyzes the phosphorylation of 5-deoxyribose to 5-deoxyribose-1-phosphate. Part of a bifunctional DHAP-shunt salvage pathway for SAM by-products. The protein is Methylthioribose kinase of Escherichia coli O45:K1 (strain S88 / ExPEC).